The sequence spans 143 residues: Large ribosomal subunit protein uL11 (143 aa).

This sequence belongs to the universal ribosomal protein uL11 family. As to quaternary structure, part of the ribosomal stalk of the 50S ribosomal subunit. Interacts with L10 and the large rRNA to form the base of the stalk. L10 forms an elongated spine to which L12 dimers bind in a sequential fashion forming a multimeric L10(L12)X complex. Post-translationally, one or more lysine residues are methylated.

Forms part of the ribosomal stalk which helps the ribosome interact with GTP-bound translation factors. The sequence is that of Large ribosomal subunit protein uL11 from Azotobacter vinelandii (strain DJ / ATCC BAA-1303).